The following is a 311-amino-acid chain: Probable cell division protein WhiA (311 aa).

The segment at residues 277–311 is a DNA-binding region (H-T-H motif); sequence TLKEVADQIPDGPISKSGVNHRFKKLHEIAESLRE.

Belongs to the WhiA family.

Involved in cell division and chromosome segregation. The protein is Probable cell division protein WhiA of Lactobacillus acidophilus (strain ATCC 700396 / NCK56 / N2 / NCFM).